We begin with the raw amino-acid sequence, 195 residues long: HTH-type transcriptional regulator BetI (195 aa).

In terms of domain architecture, HTH tetR-type spans 8 to 68; it reads SIRRRQLIDA…ATMRDITSQL (61 aa). The H-T-H motif DNA-binding region spans 31-50; it reads TIAQIARRAGVSTGIISHYF.

Its pathway is amine and polyamine biosynthesis; betaine biosynthesis via choline pathway [regulation]. In terms of biological role, repressor involved in the biosynthesis of the osmoprotectant glycine betaine. It represses transcription of the choline transporter BetT and the genes of BetAB involved in the synthesis of glycine betaine. The protein is HTH-type transcriptional regulator BetI of Escherichia coli (strain SMS-3-5 / SECEC).